The primary structure comprises 46 residues: Homeobox protein Hox-D4 (46 aa).

Positions Val-1 to Thr-46 form a DNA-binding region, homeobox.

The protein belongs to the Antp homeobox family. Deformed subfamily. Forms a DNA-binding heterodimer with transcription factor PBX1.

It localises to the nucleus. Functionally, sequence-specific transcription factor which is part of a developmental regulatory system that provides cells with specific positional identities on the anterior-posterior axis. In Ovis aries (Sheep), this protein is Homeobox protein Hox-D4 (HOXD4).